The chain runs to 661 residues: DnaJ protein ERDJ2B (661 aa).

Residues 1-8 lie on the Lumenal side of the membrane; sequence MAESEENS. The helical transmembrane segment at 9 to 29 threads the bilayer; the sequence is VLFPIFILTMMAIPLVPYTFV. Residues 30-65 are Cytoplasmic-facing; that stretch reads KLSRAFSKKQRSIHCQCLECDRSGKYKRSISQSISS. A helical transmembrane segment spans residues 66–86; sequence FTSCSNLTVVLLWIVMIFLIY. Residues 87–190 lie on the Lumenal side of the membrane; that stretch reads HTKNMSRESQ…FILNMNGESG (104 aa). An N-linked (GlcNAc...) asparagine glycan is attached at asparagine 90. Residues 99-164 enclose the J domain; sequence EPFGILGLEP…LSRENFEKYG (66 aa). The chain crosses the membrane as a helical span at residues 191-211; sequence GILLLCTVGLCILLPLVIASI. The SEC63 domain maps to 206-597; the sequence is LVIASIYLWR…IGCDQKTSLK (392 aa). Residues 212 to 661 are Cytoplasmic-facing; sequence YLWRSSKYTG…SSEESGSDEE (450 aa). Positions 608 to 661 are disordered; the sequence is EGENAEEGLEEEDDEIEEEDYESEYSEDEEDKKRGSKKKVNKESSSEESGSDEE. Acidic residues predominate over residues 609–637; it reads GENAEEGLEEEDDEIEEEDYESEYSEDEE.

In terms of assembly, interacts with OEP61/TPR7. Expressed in leaves, flower buds and flowers.

Its subcellular location is the endoplasmic reticulum membrane. Required for integral membrane and secreted preprotein translocation across the endoplasmic reticulum membrane. The polypeptide is DnaJ protein ERDJ2B (ERDJ2B) (Arabidopsis thaliana (Mouse-ear cress)).